The sequence spans 288 residues: MYLLSFILGGLNTLLRQLRLSISSIDFYKDVYKNYQGYGIKYLFTLSFIPSIIYCIFILNYIITLKDYFNGTSSSKVTDNIEYIINQLPKIKYNNSKISVEEVEPIYLYSKNNNKIFVIDTKNQVSNQEKSKVPFVLEENKLKINLVSNTKKHFPSIVNYSEIFKQNEVILTPEIIKKYFADNLLYAPNLFIFFGTPVIILFWFVTFLLERSIIVLLVYGLANLLTTKTSIQTSIRLVMFSSGIPIILQPVIIILIPELSILIQLLQMFTTFLVFVAILQINKSLSHI.

4 helical membrane-spanning segments follow: residues 43-63, 190-210, 243-263, and 265-285; these read LFTLSFIPSIIYCIFILNYII, LFIFFGTPVIILFWFVTFLLE, GIPIILQPVIIILIPELSILI, and LLQMFTTFLVFVAILQINKSL.

Its subcellular location is the cell membrane. This is an uncharacterized protein from Rickettsia prowazekii (strain Madrid E).